A 1008-amino-acid polypeptide reads, in one-letter code: Pre-mRNA-splicing factor SNU114 (1008 aa).

Ser-85 carries the phosphoserine modification. Phosphothreonine is present on Thr-88. The tr-type G domain maps to 131–338 (ERIINVGVIG…SYYYAHSIPS (208 aa)). The tract at residues 140-147 (GPLHSGKT) is G1. Residue 140 to 147 (GPLHSGKT) coordinates GTP. The tract at residues 188 to 192 (GLSIK) is G2. The G3 stretch occupies residues 214 to 217 (DAPG). Residues 214-218 (DAPGH) and 268-271 (NKLD) contribute to the GTP site. The interval 268–271 (NKLD) is G4. The G5 stretch occupies residues 315–317 (STK). Positions 504–536 (TSQSESRQKRQLHDISKTETSNEDEDEDDETPS) are disordered. Residues 509–520 (SRQKRQLHDISK) show a composition bias toward basic and acidic residues. The span at 524-536 (SNEDEDEDDETPS) shows a compositional bias: acidic residues.

This sequence belongs to the TRAFAC class translation factor GTPase superfamily. Classic translation factor GTPase family. EF-G/EF-2 subfamily. As to quaternary structure, belongs to the CWC complex (or CEF1-associated complex), a spliceosome sub-complex reminiscent of a late-stage spliceosome composed of the U2, U5 and U6 snRNAs and at least BUD13, BUD31, BRR2, CDC40, CEF1, CLF1, CUS1, CWC2, CWC15, CWC21, CWC22, CWC23, CWC24, CWC25, CWC27, ECM2, HSH155, IST3, ISY1, LEA1, MSL1, NTC20, PRP8, PRP9, PRP11, PRP19, PRP21, PRP22, PRP45, PRP46, SLU7, SMB1, SMD1, SMD2, SMD3, SMX2, SMX3, SNT309, SNU114, SPP2, SYF1, SYF2, RSE1 and YJU2. Component of the U4/U6-U5 tri-snRNP complex composed of the U4, U6 and U5 snRNAs and at least PRP3, PRP4, PRP6, PRP8, PRP18, PRP31, PRP38, SNU13, SNU23, SNU66, SNU114, SPP381, SMB1, SMD1, SMD2, SMD3, SMX2, SMX3, LSM2, LSM3, LSM4, LSM5, LSM6, LSM7, LSM8, BRR2 and DIB1. Interacts (via C-terminus) with CWC21. Interacts (via N-terminus) with PRP8 (via SCwid domain).

It is found in the nucleus. In terms of biological role, component of the U5 snRNP complex required for pre-mRNA splicing. Binds GTP. This is Pre-mRNA-splicing factor SNU114 (SNU114) from Saccharomyces cerevisiae (strain ATCC 204508 / S288c) (Baker's yeast).